The following is a 329-amino-acid chain: Porphobilinogen deaminase (329 aa).

Cys-250 is subject to S-(dipyrrolylmethanemethyl)cysteine.

This sequence belongs to the HMBS family. As to quaternary structure, monomer. The cofactor is dipyrromethane.

The enzyme catalyses 4 porphobilinogen + H2O = hydroxymethylbilane + 4 NH4(+). It participates in porphyrin-containing compound metabolism; protoporphyrin-IX biosynthesis; coproporphyrinogen-III from 5-aminolevulinate: step 2/4. Functionally, tetrapolymerization of the monopyrrole PBG into the hydroxymethylbilane pre-uroporphyrinogen in several discrete steps. In Burkholderia thailandensis (strain ATCC 700388 / DSM 13276 / CCUG 48851 / CIP 106301 / E264), this protein is Porphobilinogen deaminase.